The primary structure comprises 467 residues: ATP synthase subunit beta (467 aa).

Position 152-159 (152-159 (GGAGVGKT)) interacts with ATP.

It belongs to the ATPase alpha/beta chains family. In terms of assembly, F-type ATPases have 2 components, CF(1) - the catalytic core - and CF(0) - the membrane proton channel. CF(1) has five subunits: alpha(3), beta(3), gamma(1), delta(1), epsilon(1). CF(0) has three main subunits: a(1), b(2) and c(9-12). The alpha and beta chains form an alternating ring which encloses part of the gamma chain. CF(1) is attached to CF(0) by a central stalk formed by the gamma and epsilon chains, while a peripheral stalk is formed by the delta and b chains.

The protein resides in the cell membrane. It carries out the reaction ATP + H2O + 4 H(+)(in) = ADP + phosphate + 5 H(+)(out). Produces ATP from ADP in the presence of a proton gradient across the membrane. The catalytic sites are hosted primarily by the beta subunits. The sequence is that of ATP synthase subunit beta from Caldicellulosiruptor bescii (strain ATCC BAA-1888 / DSM 6725 / KCTC 15123 / Z-1320) (Anaerocellum thermophilum).